A 284-amino-acid chain; its full sequence is 4-diphosphocytidyl-2-C-methyl-D-erythritol kinase (284 aa).

The active site involves Lys14. 98-108 (PMGGGLGGGSS) contributes to the ATP binding site. Asp140 is a catalytic residue.

It belongs to the GHMP kinase family. IspE subfamily.

The enzyme catalyses 4-CDP-2-C-methyl-D-erythritol + ATP = 4-CDP-2-C-methyl-D-erythritol 2-phosphate + ADP + H(+). The protein operates within isoprenoid biosynthesis; isopentenyl diphosphate biosynthesis via DXP pathway; isopentenyl diphosphate from 1-deoxy-D-xylulose 5-phosphate: step 3/6. Its function is as follows. Catalyzes the phosphorylation of the position 2 hydroxy group of 4-diphosphocytidyl-2C-methyl-D-erythritol. This Shewanella baltica (strain OS195) protein is 4-diphosphocytidyl-2-C-methyl-D-erythritol kinase.